Consider the following 190-residue polypeptide: Voltage-dependent calcium channel gamma-like subunit (190 aa).

The next 4 helical transmembrane spans lie at 25-45 (FIRT…SVSI), 96-116 (ALAV…QLCE), 131-151 (LLVS…LLRN), and 155-175 (LIGF…LFLN).

It belongs to the PMP-22/EMP/MP20 family. CACNG subfamily. As to quaternary structure, the L-type calcium channel is composed of five subunits: alpha-1, alpha-2/delta, beta and gamma.

It localises to the membrane. In terms of biological role, thought to stabilize the calcium channel in an inactivated (closed) state. Modulates calcium current when coexpressed with CACNA1G. This is Voltage-dependent calcium channel gamma-like subunit from Homo sapiens (Human).